The sequence spans 81 residues: ATP synthase subunit c (81 aa).

Transmembrane regions (helical) follow at residues 5–25 and 57–77; these read VAAA…IGPG and LAFM…LLFA.

This sequence belongs to the ATPase C chain family. F-type ATPases have 2 components, F(1) - the catalytic core - and F(0) - the membrane proton channel. F(1) has five subunits: alpha(3), beta(3), gamma(1), delta(1), epsilon(1). F(0) has four main subunits: a(1), b(1), b'(1) and c(10-14). The alpha and beta chains form an alternating ring which encloses part of the gamma chain. F(1) is attached to F(0) by a central stalk formed by the gamma and epsilon chains, while a peripheral stalk is formed by the delta, b and b' chains.

It is found in the cellular thylakoid membrane. Functionally, f(1)F(0) ATP synthase produces ATP from ADP in the presence of a proton or sodium gradient. F-type ATPases consist of two structural domains, F(1) containing the extramembraneous catalytic core and F(0) containing the membrane proton channel, linked together by a central stalk and a peripheral stalk. During catalysis, ATP synthesis in the catalytic domain of F(1) is coupled via a rotary mechanism of the central stalk subunits to proton translocation. In terms of biological role, key component of the F(0) channel; it plays a direct role in translocation across the membrane. A homomeric c-ring of between 10-14 subunits forms the central stalk rotor element with the F(1) delta and epsilon subunits. This chain is ATP synthase subunit c, found in Microcystis aeruginosa (strain NIES-843 / IAM M-2473).